The sequence spans 448 residues: Ribosome biogenesis protein YTM1 (448 aa).

Positions 5–86 (TSNQAVVFST…EETLEIEYIE (82 aa)) are ubiquitin-like (UBL) domain. 6 WD repeats span residues 98-136 (PHES…TLDA), 191-230 (LHTA…KHEV), 271-309 (SHIG…CTRT), 312-351 (ASEK…ALSA), 357-397 (LHPA…AAIS), and 403-439 (DGTK…ETQG). The segment at 225–261 (PPKHEVPEPTITAADQRTKKRRKVDPSSGDSSSPTAI) is disordered.

It belongs to the WD repeat WDR12/YTM1 family. In terms of assembly, component of the NOP7 complex, composed of ERB1, NOP7 and YTM1. The complex is held together by ERB1, which interacts with NOP7 via its N-terminal domain and with YTM1 via a high-affinity interaction between the seven-bladed beta-propeller domains of the 2 proteins. The NOP7 complex associates with the 66S pre-ribosome. Interacts (via UBL domain) with MDN1 (via VWFA/MIDAS domain).

It localises to the nucleus. It is found in the nucleolus. Its subcellular location is the nucleoplasm. In terms of biological role, component of the NOP7 complex, which is required for maturation of the 25S and 5.8S ribosomal RNAs and formation of the 60S ribosome. The protein is Ribosome biogenesis protein YTM1 of Coprinopsis cinerea (strain Okayama-7 / 130 / ATCC MYA-4618 / FGSC 9003) (Inky cap fungus).